The chain runs to 523 residues: 3-hydroxybenzoate--CoA/4-hydroxybenzoate--CoA ligase (523 aa).

The protein belongs to the ATP-dependent AMP-binding enzyme family. Benzoate-CoA ligase subfamily.

It catalyses the reaction 4-hydroxybenzoate + ATP + CoA = 4-hydroxybenzoyl-CoA + AMP + diphosphate. The enzyme catalyses 3-hydroxybenzoate + ATP + CoA = 3-hydroxybenzoyl-CoA + AMP + diphosphate. Its function is as follows. Catalyzes the ligation of 3-hydroxybenzoate or 4-hydroxybenzoate and CoA at the expense of ATP. The enzyme shows low activity towards benzoate, 4-aminobenzoate, 3-aminobenzoate, 3-fluorobenzoate, 4-fluorobenzoate, 3-chlorobenzoate, and 4-chlorobenzoate. There is no activity with 3,4-dihydroxybenzoate, 2,3-dihydroxybenzoate, and 2-hydroxybenzoate as substrates. The protein is 3-hydroxybenzoate--CoA/4-hydroxybenzoate--CoA ligase (hcl) of Thauera aromatica.